A 264-amino-acid chain; its full sequence is Hemin import ATP-binding protein HmuV (264 aa).

The 240-residue stretch at 2-241 folds into the ABC transporter domain; it reads IEVSGLSVRL…ATMLSVFGCA (240 aa). 34–41 serves as a coordination point for ATP; that stretch reads GPNGSGKT.

This sequence belongs to the ABC transporter superfamily. Heme (hemin) importer (TC 3.A.1.14.5) family. In terms of assembly, the complex is composed of two ATP-binding proteins (HmuV), two transmembrane proteins (HmuU) and a solute-binding protein (HmuT).

The protein localises to the cell inner membrane. Part of the ABC transporter complex HmuTUV involved in hemin import. Responsible for energy coupling to the transport system. This Rhizobium etli (strain ATCC 51251 / DSM 11541 / JCM 21823 / NBRC 15573 / CFN 42) protein is Hemin import ATP-binding protein HmuV.